A 229-amino-acid polypeptide reads, in one-letter code: Transcriptional activator protein YukR (229 aa).

Residues 157–222 enclose the HTH luxR-type domain; that stretch reads DTSGKGILSP…QAIRLGVELE (66 aa). The segment at residues 181-200 is a DNA-binding region (H-T-H motif); the sequence is YPEIALIAGITTRTVKHHMG.

This sequence belongs to the autoinducer-regulated transcriptional regulatory protein family.

Probable transcriptional activator. Binds to an autoinducer molecule. This chain is Transcriptional activator protein YukR (yukR), found in Yersinia ruckeri.